We begin with the raw amino-acid sequence, 219 residues long: Putative zinc metalloprotease YwhC (219 aa).

Residues 4–24 (FLYYPLSLMPYLVITLIVSFT) form a helical membrane-spanning segment. His26 lines the Zn(2+) pocket. Glu27 is an active-site residue. Position 30 (His30) interacts with Zn(2+). 4 helical membrane-spanning segments follow: residues 52-72 (PIKH…FGWA), 94-114 (IAGP…LVLM), 132-152 (FFSI…LPLP), and 180-200 (FIVF…WPML).

This sequence belongs to the peptidase M50B family. It depends on Zn(2+) as a cofactor.

The protein resides in the cell membrane. The polypeptide is Putative zinc metalloprotease YwhC (ywhC) (Bacillus subtilis (strain 168)).